The primary structure comprises 330 residues: DNA-binding death effector domain-containing protein 2 (330 aa).

One can recognise a DED domain in the interval 25–104; the sequence is SLHRMFEVVG…RHDLLPHLAR (80 aa). The Nuclear localization signal motif lies at 104–109; sequence RKRRRP. Residues 104–195 are disordered; sequence RKRRRPVSPE…HQELGRPSSE (92 aa). Residues 137–147 are compositionally biased toward low complexity; the sequence is ASSSSDSPQSQ. The short motif at 156 to 174 is the Bipartite nuclear localization signal element; the sequence is KRQRRSRGRPSSGARQRRR.

As to quaternary structure, interacts with CASP8, CASP10 and GTF3C3. Homodimerizes and heterodimerizes with DEDD. In terms of tissue distribution, expression is high in liver, heart, kidney, and testis but low in brain, spleen, lung, and skeleton muscle.

It localises to the nucleus. It is found in the nucleolus. In terms of biological role, may play a critical role in death receptor-induced apoptosis and may target CASP8 and CASP10 to the nucleus. May regulate degradation of intermediate filaments during apoptosis. May play a role in the general transcription machinery in the nucleus and might be an important regulator of the activity of GTF3C3. In Mus musculus (Mouse), this protein is DNA-binding death effector domain-containing protein 2 (Dedd2).